The chain runs to 185 residues: Ribosome-recycling factor (185 aa).

It belongs to the RRF family.

The protein localises to the cytoplasm. In terms of biological role, responsible for the release of ribosomes from messenger RNA at the termination of protein biosynthesis. May increase the efficiency of translation by recycling ribosomes from one round of translation to another. This is Ribosome-recycling factor from Clostridium acetobutylicum (strain ATCC 824 / DSM 792 / JCM 1419 / IAM 19013 / LMG 5710 / NBRC 13948 / NRRL B-527 / VKM B-1787 / 2291 / W).